A 282-amino-acid polypeptide reads, in one-letter code: 4-diphosphocytidyl-2-C-methyl-D-erythritol kinase (282 aa).

The active site involves Lys-13. Pro-96 to Ser-106 is an ATP binding site. The active site involves Asp-138.

It belongs to the GHMP kinase family. IspE subfamily.

It carries out the reaction 4-CDP-2-C-methyl-D-erythritol + ATP = 4-CDP-2-C-methyl-D-erythritol 2-phosphate + ADP + H(+). Its pathway is isoprenoid biosynthesis; isopentenyl diphosphate biosynthesis via DXP pathway; isopentenyl diphosphate from 1-deoxy-D-xylulose 5-phosphate: step 3/6. Functionally, catalyzes the phosphorylation of the position 2 hydroxy group of 4-diphosphocytidyl-2C-methyl-D-erythritol. In Pseudomonas syringae pv. syringae (strain B728a), this protein is 4-diphosphocytidyl-2-C-methyl-D-erythritol kinase.